Reading from the N-terminus, the 222-residue chain is Protein GrpE (222 aa).

The protein belongs to the GrpE family. In terms of assembly, homodimer.

It is found in the cytoplasm. Its function is as follows. Participates actively in the response to hyperosmotic and heat shock by preventing the aggregation of stress-denatured proteins, in association with DnaK and GrpE. It is the nucleotide exchange factor for DnaK and may function as a thermosensor. Unfolded proteins bind initially to DnaJ; upon interaction with the DnaJ-bound protein, DnaK hydrolyzes its bound ATP, resulting in the formation of a stable complex. GrpE releases ADP from DnaK; ATP binding to DnaK triggers the release of the substrate protein, thus completing the reaction cycle. Several rounds of ATP-dependent interactions between DnaJ, DnaK and GrpE are required for fully efficient folding. The chain is Protein GrpE from Bartonella bacilliformis (strain ATCC 35685 / KC583 / Herrer 020/F12,63).